The chain runs to 188 residues: Probable nicotinate-nucleotide adenylyltransferase (188 aa).

It belongs to the NadD family.

The catalysed reaction is nicotinate beta-D-ribonucleotide + ATP + H(+) = deamido-NAD(+) + diphosphate. The protein operates within cofactor biosynthesis; NAD(+) biosynthesis; deamido-NAD(+) from nicotinate D-ribonucleotide: step 1/1. In terms of biological role, catalyzes the reversible adenylation of nicotinate mononucleotide (NaMN) to nicotinic acid adenine dinucleotide (NaAD). In Solibacter usitatus (strain Ellin6076), this protein is Probable nicotinate-nucleotide adenylyltransferase.